The following is a 137-amino-acid chain: Large ribosomal subunit protein uL16c (137 aa).

This sequence belongs to the universal ribosomal protein uL16 family. Part of the 50S ribosomal subunit.

Its subcellular location is the plastid. This Cuscuta exaltata (Tall dodder) protein is Large ribosomal subunit protein uL16c.